Here is a 445-residue protein sequence, read N- to C-terminus: Glutamate-1-semialdehyde 2,1-aminomutase (445 aa).

Position 281 is an N6-(pyridoxal phosphate)lysine (K281).

It belongs to the class-III pyridoxal-phosphate-dependent aminotransferase family. HemL subfamily. Homodimer. The cofactor is pyridoxal 5'-phosphate.

It localises to the cytoplasm. The catalysed reaction is (S)-4-amino-5-oxopentanoate = 5-aminolevulinate. It participates in porphyrin-containing compound metabolism; protoporphyrin-IX biosynthesis; 5-aminolevulinate from L-glutamyl-tRNA(Glu): step 2/2. The protein is Glutamate-1-semialdehyde 2,1-aminomutase of Nocardioides sp. (strain ATCC BAA-499 / JS614).